Here is a 376-residue protein sequence, read N- to C-terminus: Lysocardiolipin acyltransferase 1 (376 aa).

Residues 9-29 (FILFLFAGSFFGSIFMLGPIL) form a helical membrane-spanning segment. An N-linked (GlcNAc...) asparagine glycan is attached at Asn35. Residues 48–68 (ATWLTLPVALLETMFGVRVVI) form a helical membrane-spanning segment. The HXXXXD motif motif lies at 85–90 (HRTRVD). N6-acetyllysine is present on Lys183. A run of 2 helical transmembrane segments spans residues 309 to 329 (LLSI…IYLY) and 336 to 356 (FIIS…LEII).

Belongs to the 1-acyl-sn-glycerol-3-phosphate acyltransferase family. Widely expressed with highest expression in heart, liver and 12.5 dpc aorta-gonad-mesonephros and lower levels in the 16 dpc fetal liver and adult bone marrow. In bone marrow, highest levels are found in B-cells compared with whole bone marrow, T-cells, erythrocytes, and granulocytes.

It is found in the endoplasmic reticulum membrane. The catalysed reaction is a 1-acyl-sn-glycero-3-phosphate + an acyl-CoA = a 1,2-diacyl-sn-glycero-3-phosphate + CoA. It catalyses the reaction a 1-acyl-sn-glycero-3-phospho-(1D-myo-inositol) + an acyl-CoA = a 1,2-diacyl-sn-glycero-3-phospho-(1D-myo-inositol) + CoA. The enzyme catalyses 1-acyl-sn-glycero-3-phospho-(1'-sn-glycerol) + an acyl-CoA = a 1,2-diacyl-sn-glycero-3-phospho-(1'-sn-glycerol) + CoA. It carries out the reaction 1-hexadecanoyl-sn-glycero-3-phosphate + (9Z)-octadecenoyl-CoA = 1-hexadecanoyl-2-(9Z-octadecenoyl)-sn-glycero-3-phosphate + CoA. The catalysed reaction is 1-(9Z-octadecenoyl)-sn-glycero-3-phosphate + (9Z)-octadecenoyl-CoA = 1,2-di-(9Z-octadecenoyl)-sn-glycero-3-phosphate + CoA. It catalyses the reaction 1-(9Z,12Z)-octadecadienoyl-sn-glycero-3-phosphate + (9Z)-octadecenoyl-CoA = 1-(9Z,12Z)-octadecadienoyl-2-(9Z)-octadecenoyl-sn-glycero-3-phosphate + CoA. The enzyme catalyses 1-(9Z,12Z,15Z)-octadecatrienoyl-sn-glycero-3-phosphate + (9Z)-octadecenoyl-CoA = 1-(9Z,12Z,15Z)-octadecatrienoyl-2-(9Z)-octadecenoyl-sn-glycero-3-phosphate + CoA. It carries out the reaction 1-(9Z-octadecenoyl)-sn-glycero-3-phosphate + hexadecanoyl-CoA = 1-(9Z)-octadecenoyl-2-hexadecanoyl-sn-glycero-3-phosphate + CoA. The catalysed reaction is 1-(9Z-octadecenoyl)-sn-glycero-3-phosphate + octadecanoyl-CoA = 1-(9Z-octadecenoyl)-2-octadecanoyl-sn-glycero-3-phosphate + CoA. It catalyses the reaction 1-acyl-sn-glycero-3-phospho-(1'-sn-glycerol) + (9Z)-octadecenoyl-CoA = 1-acyl-2-(9Z-octadecenoyl)-sn-glycero-3-phospho-(1'-sn-glycerol) + CoA. The enzyme catalyses a 1-acyl-sn-glycero-3-phospho-(1D-myo-inositol) + (9Z)-octadecenoyl-CoA = a 1-acyl-2-(9Z-octadecenoyl)-sn-glycero-3-phospho-(1D-myo-inositol) + CoA. It carries out the reaction 1-hexadecanoyl-sn-glycero-3-phospho-(1D-myo-inositol) + hexadecanoyl-CoA = 1,2-dihexadecanoyl-sn-glycero-3-phospho-(1D-myo-inositol) + CoA. The catalysed reaction is 1-hexadecanoyl-sn-glycero-3-phospho-(1D-myo-inositol) + octadecanoyl-CoA = 1-hexadecanoyl-2-octadecanoyl-sn-glycero-3-phospho-(1D-myo-inositol) + CoA. It catalyses the reaction 1-hexadecanoyl-sn-glycero-3-phospho-(1D-myo-inositol) + (9Z)-octadecenoyl-CoA = 1-hexadecanoyl-2-(9Z-octadecenoyl)-sn-glycero-3-phospho-(1D-myo-inositol) + CoA. The enzyme catalyses 1-hexadecanoyl-sn-glycero-3-phospho-(1D-myo-inositol) + (9Z,12Z)-octadecadienoyl-CoA = 1-hexadecanoyl-2-(9Z,12Z-octadecadienoyl)-sn-glycero-3-phospho-(1D-myo-inositol) + CoA. It carries out the reaction 1-hexadecanoyl-sn-glycero-3-phospho-(1D-myo-inositol) + (5Z,8Z,11Z,14Z)-eicosatetraenoyl-CoA = 1-hexadecanoyl-2-(5Z,8Z,11Z,14Z-eicosatetraenoyl)-sn-glycero-3-phospho-D-myo-inositol + CoA. The catalysed reaction is 1-hexadecanoyl-sn-glycero-3-phospho-(1'-sn-glycerol) + hexadecanoyl-CoA = 1,2-dihexadecanoyl-sn-glycero-3-phospho-(1'-sn-glycerol) + CoA. It catalyses the reaction 1-hexadecanoyl-sn-glycero-3-phospho-(1'-sn-glycerol) + octadecanoyl-CoA = 1-hexadecanoyl-2-octadecanoyl-sn-glycero-3-phospho-(1'-sn-glycerol) + CoA. The enzyme catalyses 1-hexadecanoyl-sn-glycero-3-phospho-(1'-sn-glycerol) + (9Z)-octadecenoyl-CoA = 1-hexadecanoyl-2-(9Z-octadecenoyl)-sn-glycero-3-phospho-(1'-sn-glycerol) + CoA. It carries out the reaction 1-hexadecanoyl-sn-glycero-3-phospho-(1'-sn-glycerol) + (9Z,12Z)-octadecadienoyl-CoA = 1-hexadecanoyl-2-(9Z,12Z-octadecadienoyl)-sn-glycero-3-phospho-(1'-sn-glycerol) + CoA. The catalysed reaction is 1-tetradecanoyl-sn-glycero-3-phospho-(1'-sn-glycerol) + (9Z)-octadecenoyl-CoA = 1-tetradecanoyl-2-(9Z-octadecenoyl)-sn-glycero-3-phospho-(1'-sn-glycerol) + CoA. It catalyses the reaction 1-octadecanoyl-sn-glycero-3-phospho-(1'-sn-glycerol) + (9Z)-octadecenoyl-CoA = 1-octadecanoyl-2-(9Z-octadecenoyl)-sn-glycero-3-phospho-(1'-sn-glycerol) + CoA. The enzyme catalyses 1-(9Z-octadecenoyl)-sn-glycero-3-phospho-(1'-sn-glycerol) + (9Z)-octadecenoyl-CoA = 1,2-di-(9Z-octadecenoyl)-sn-glycero-3-phospho-(1'-sn-glycerol) + CoA. It carries out the reaction 1-hexadecanoyl-sn-glycero-3-phospho-(1D-myo-inositol) + dodecanoyl-CoA = 1-hexadecanoyl-2-dodecanoyl-sn-glycero-3-phospho-(1D-myo-inositol) + CoA. The catalysed reaction is 1',3'-bis-[1-acyl-sn-glycero-3-phospho]-glycerol + (9Z)-octadecenoyl-CoA = 1'-[1-acyl-2-(9Z)-octadecenoyl-sn-glycero-3-phospho],3'-[1-acyl,2-hydroxy-sn-glycero-3-phospho]-glycerol + CoA. It catalyses the reaction 1'-[1,2-diacyl-sn-glycero-3-phospho],3'-[1-acyl-sn-glycero-3-phospho]-glycerol + (9Z)-octadecenoyl-CoA = 1'-[1,2-diacyl-sn-glycero-3-phospho],3'-[1-acyl,2-(9Z)-octadecenoyl-sn-glycero-3-phospho]-glycerol + CoA. The enzyme catalyses 1'-[1,2-diacyl-sn-glycero-3-phospho],3'-[1-acyl-sn-glycero-3-phospho]-glycerol + (9Z,12Z)-octadecadienoyl-CoA = 1'-[1,2-diacyl-sn-glycero-3-phospho],3'-[1-acyl,2-(9Z,12Z)-octadecadienoyl-sn-glycero-3-phospho]-glycerol + CoA. It carries out the reaction 1'-[1,2-diacyl-sn-glycero-3-phospho],3'-[1-acyl-sn-glycero-3-phospho]-glycerol + dodecanoyl-CoA = 1'-[1,2-diacyl-sn-glycero-3-phospho],3'-[1-acyl,2-dodecanoyl-sn-glycero-3-phospho]-glycerol + CoA. The catalysed reaction is 1',3'-bis-[1-acyl-sn-glycero-3-phospho]-glycerol + dodecanoyl-CoA = 1'-[1-acyl-2-dodecanoyl-sn-glycero-3-phospho],3'-[1-acyl,2-hydroxy-sn-glycero-3-phospho]-glycerol + CoA. It catalyses the reaction a 1-acyl-sn-glycero-3-phosphate + (9Z)-octadecenoyl-CoA = a 1-acyl-2-(9Z-octadecenoyl)-sn-glycero-3-phosphate + CoA. The enzyme catalyses 1',3'-bis-[1-acyl-sn-glycero-3-phospho]-glycerol + (9Z,12Z)-octadecadienoyl-CoA = 1'-[1-acyl-2-(9Z,12Z)-octadecadienoyl-sn-glycero-3-phospho],3'-[1-acyl,2-hydroxy-sn-glycero-3-phospho]-glycerol + CoA. It carries out the reaction 1',3'-bis-[1-acyl-sn-glycero-3-phospho]-glycerol + hexadecanoyl-CoA = 1'-[1-acyl-2-hexadecanoyl-sn-glycero-3-phospho],3'-[1-acyl,2-hydroxy-sn-glycero-3-phospho]-glycerol + CoA. The catalysed reaction is 1',3'-bis-[1-acyl-sn-glycero-3-phospho]-glycerol + octadecanoyl-CoA = 1'-[1-acyl-2-octadecanoyl-sn-glycero-3-phospho],3'-[1-acyl,2-hydroxy-sn-glycero-3-phospho]-glycerol + CoA. It catalyses the reaction 1'-[1,2-diacyl-sn-glycero-3-phospho],3'-[1-acyl-sn-glycero-3-phospho]-glycerol + octanoyl-CoA = 1'-[1,2-diacyl-sn-glycero-3-phospho],3'-[1-acyl,2-octanoyl-sn-glycero-3-phospho]-glycerol + CoA. The enzyme catalyses 1',3'-bis-[1-acyl-sn-glycero-3-phospho]-glycerol + octanoyl-CoA = 1'-[1-acyl-2-octanoyl-sn-glycero-3-phospho],3'-[1-acyl,2-hydroxy-sn-glycero-3-phospho]-glycerol + CoA. It carries out the reaction 1'-[1,2-diacyl-sn-glycero-3-phospho],3'-[1-acyl-sn-glycero-3-phospho]-glycerol + hexadecanoyl-CoA = 1'-[1,2-diacyl-sn-glycero-3-phospho],3'-[1-acyl,2-hexadecanoyl-sn-glycero-3-phospho]-glycerol + CoA. The catalysed reaction is 1'-[1,2-diacyl-sn-glycero-3-phospho],3'-[1-acyl-sn-glycero-3-phospho]-glycerol + (5Z,8Z,11Z,14Z)-eicosatetraenoyl-CoA = 1'-[1,2-diacyl-sn-glycero-3-phospho],3'-[1-acyl,2-(5Z,8Z,11Z,14Z)-eicosatetraenoyl-sn-glycero-3-phospho]-glycerol + CoA. It catalyses the reaction 1',3'-bis-[1-acyl-sn-glycero-3-phospho]-glycerol + (5Z,8Z,11Z,14Z)-eicosatetraenoyl-CoA = 1'-[1-acyl-2-(5Z,8Z,11Z,14Z)-eicosatetraenoyl-sn-glycero-3-phospho],3'-[1-acyl,2-hydroxy-sn-glycero-3-phospho]-glycerol + CoA. The enzyme catalyses a 1-acyl-sn-glycero-3-phospho-(1D-myo-inositol) + octadecanoyl-CoA = a 1-acyl-2-octadecanoyl-sn-glycero-3-phospho-(1D-myo-inositol) + CoA. It carries out the reaction a 2-acyl-sn-glycero-3-phospho-D-myo-inositol + octadecanoyl-CoA = 1-octadecanoyl-2-acyl-sn-glycero-3-phospho-1D-myo-inositol + CoA. Its pathway is phospholipid metabolism; CDP-diacylglycerol biosynthesis; CDP-diacylglycerol from sn-glycerol 3-phosphate: step 2/3. Functionally, exhibits acyl-CoA:lysocardiolipin acyltransferase (ALCAT) activity; catalyzes the reacylation of lyso-cardiolipin to cardiolipin (CL), a key step in CL remodeling. Recognizes both monolysocardiolipin and dilysocardiolipin as substrates with a preference for linoleoyl-CoA and oleoyl-CoA as acyl donors. Also exhibits 1-acyl-sn-glycerol-3-phosphate acyltransferase activity (AGPAT) activity; converts 1-acyl-sn-glycerol-3- phosphate (lysophosphatidic acid or LPA) into 1,2-diacyl-sn-glycerol-3- phosphate (phosphatidic acid or PA) by incorporating an acyl moiety at the sn-2 position of the glycerol backbone. Possesses lysophosphatidylinositol acyltransferase (LPIAT) activity. Possesses lysophosphatidylglycerol acyltransferase (LPGAT) activity. Required for establishment of the hematopoietic and endothelial lineages. The protein is Lysocardiolipin acyltransferase 1 (Lclat1) of Mus musculus (Mouse).